The primary structure comprises 247 residues: MGQKVNPNGFRYGITKAHNSVWYADKMQFASHLLEDQKIYDFFDKKVRQLQIGNVQIKRNQNGLILIYVYTAKPAVMLGTNGENIKNLTKDLQKILKNKKANISIQVIELKKPDLNARLLAEDIAIKLENRGSFRLAQKFAIKAALKAGAKGIKTSVSGRLNGVDMARTEGYNEGEMKLHTLRQDVDYAATTAKTTYGILGVKVWVSLGEILSDEQKAKQEEMDLLNAPKDRRVRRGGERHASTKKN.

A KH type-2 domain is found at 39 to 111 (IYDFFDKKVR…NISIQVIELK (73 aa)). The interval 221–247 (EEMDLLNAPKDRRVRRGGERHASTKKN) is disordered. Residues 236–247 (RGGERHASTKKN) are compositionally biased toward basic and acidic residues.

Belongs to the universal ribosomal protein uS3 family. In terms of assembly, part of the 30S ribosomal subunit. Forms a tight complex with proteins S10 and S14.

Binds the lower part of the 30S subunit head. Binds mRNA in the 70S ribosome, positioning it for translation. The polypeptide is Small ribosomal subunit protein uS3 (Metamycoplasma arthritidis (strain 158L3-1) (Mycoplasma arthritidis)).